A 320-amino-acid polypeptide reads, in one-letter code: Replication-associated protein ORF2 (320 aa).

Catalysis depends on O-(5'-phospho-DNA)-tyrosine intermediate residues Tyr-188 and Tyr-192.

Belongs to the microviridae Rep protein family.

It carries out the reaction ATP + (deoxyribonucleotide)n-3'-hydroxyl + 5'-phospho-(deoxyribonucleotide)m = (deoxyribonucleotide)n+m + AMP + diphosphate.. Its function is as follows. Plays an essential role in viral DNA replication. Binds the origin of replication and cleaves the dsDNA replicative form I (RFI) and becomes covalently bound to it via phosphotyrosine bond, generating the dsDNA replicative form II (RFII). In turn, viral DNA replication initiates at the 3'-OH of the cleavage site. After one round of rolling circle synthesis, protein ORF2 is linked to the newly synthesized ssDNA and joins the ends of the displaced strand to generate a circular single-stranded molecule ready to be packed into a virion. This Spiroplasma virus 4 (SpV4) protein is Replication-associated protein ORF2.